The chain runs to 378 residues: Cytochrome b (378 aa).

A run of 4 helical transmembrane segments spans residues 33–53, 77–98, 113–133, and 178–198; these read SGSL…FLSM, WLIR…YFHI, XNVG…GYVL, and FFAF…IHLI. Histidine 83 and histidine 97 together coordinate heme b. Histidine 196 contributes to the heme b binding site. An a ubiquinone-binding site is contributed by histidine 201. A run of 4 helical transmembrane segments spans residues 226 to 246, 288 to 308, 320 to 340, and 347 to 367; these read FKDL…ALFS, LGGV…PILH, LTQF…WIGG, and FIII…VLFP.

It belongs to the cytochrome b family. The cytochrome bc1 complex contains 3 respiratory subunits (MT-CYB, CYC1 and UQCRFS1), 2 core proteins (UQCRC1 and UQCRC2) and probably 6 low-molecular weight proteins. Heme b is required as a cofactor.

Its subcellular location is the mitochondrion inner membrane. Its function is as follows. Component of the ubiquinol-cytochrome c reductase complex (complex III or cytochrome b-c1 complex) that is part of the mitochondrial respiratory chain. The b-c1 complex mediates electron transfer from ubiquinol to cytochrome c. Contributes to the generation of a proton gradient across the mitochondrial membrane that is then used for ATP synthesis. The protein is Cytochrome b (mt-cyb) of Nannacara anomala (Goldeneye cichlid).